The sequence spans 247 residues: 2,3-bisphosphoglycerate-dependent phosphoglycerate mutase (247 aa).

Residues 8–15 (RHGESVWN), 21–22 (TG), Arg60, 87–90 (ERHY), Lys98, 114–115 (RR), and 183–184 (GN) each bind substrate. Residue His9 is the Tele-phosphohistidine intermediate of the active site. The active-site Proton donor/acceptor is the Glu87.

It belongs to the phosphoglycerate mutase family. BPG-dependent PGAM subfamily. In terms of assembly, homodimer.

The catalysed reaction is (2R)-2-phosphoglycerate = (2R)-3-phosphoglycerate. Its pathway is carbohydrate degradation; glycolysis; pyruvate from D-glyceraldehyde 3-phosphate: step 3/5. Its function is as follows. Catalyzes the interconversion of 2-phosphoglycerate and 3-phosphoglycerate. The sequence is that of 2,3-bisphosphoglycerate-dependent phosphoglycerate mutase from Geobacter sulfurreducens (strain ATCC 51573 / DSM 12127 / PCA).